The following is a 333-amino-acid chain: Leucine carboxyl methyltransferase 1 (333 aa).

S-adenosyl-L-methionine-binding positions include R79, G108, D131, N180–V181, and E206.

Belongs to the methyltransferase superfamily. LCMT family.

The enzyme catalyses [phosphatase 2A protein]-C-terminal L-leucine + S-adenosyl-L-methionine = [phosphatase 2A protein]-C-terminal L-leucine methyl ester + S-adenosyl-L-homocysteine. In terms of biological role, methylates the carboxyl group of the C-terminal leucine residue of protein phosphatase 2A catalytic subunits to form alpha-leucine ester residues. In Kluyveromyces lactis (strain ATCC 8585 / CBS 2359 / DSM 70799 / NBRC 1267 / NRRL Y-1140 / WM37) (Yeast), this protein is Leucine carboxyl methyltransferase 1 (PPM1).